Here is a 240-residue protein sequence, read N- to C-terminus: Adenosylcobinamide-GDP ribazoletransferase (240 aa).

A run of 5 helical transmembrane segments spans residues 31-51 (LLYYPLVGLLFGLLLWLASHL), 57-77 (APLHAALLLTAWVLLSGALHL), 109-129 (IAVVTLVLVLLLKFCALWVLV), 133-153 (VGAQLLLAPLIGRTAMLGLFL), and 185-205 (LFCLLLGGWVVLLAVAVFAWL).

It belongs to the CobS family. Requires Mg(2+) as cofactor.

It is found in the cell inner membrane. The catalysed reaction is alpha-ribazole + adenosylcob(III)inamide-GDP = adenosylcob(III)alamin + GMP + H(+). The enzyme catalyses alpha-ribazole 5'-phosphate + adenosylcob(III)inamide-GDP = adenosylcob(III)alamin 5'-phosphate + GMP + H(+). The protein operates within cofactor biosynthesis; adenosylcobalamin biosynthesis; adenosylcobalamin from cob(II)yrinate a,c-diamide: step 7/7. Its function is as follows. Joins adenosylcobinamide-GDP and alpha-ribazole to generate adenosylcobalamin (Ado-cobalamin). Also synthesizes adenosylcobalamin 5'-phosphate from adenosylcobinamide-GDP and alpha-ribazole 5'-phosphate. The chain is Adenosylcobinamide-GDP ribazoletransferase from Pseudomonas putida (strain GB-1).